A 21-amino-acid polypeptide reads, in one-letter code: Cupiennin-6d (21 aa).

Residue S21 is modified to Serine amide.

As to expression, expressed by the venom gland.

It is found in the secreted. This is Cupiennin-6d from Cupiennius salei (American wandering spider).